The primary structure comprises 409 residues: NADH-quinone oxidoreductase subunit D (409 aa).

This sequence belongs to the complex I 49 kDa subunit family. In terms of assembly, NDH-1 is composed of 14 different subunits. Subunits NuoB, C, D, E, F, and G constitute the peripheral sector of the complex.

The protein localises to the cell inner membrane. The enzyme catalyses a quinone + NADH + 5 H(+)(in) = a quinol + NAD(+) + 4 H(+)(out). Its function is as follows. NDH-1 shuttles electrons from NADH, via FMN and iron-sulfur (Fe-S) centers, to quinones in the respiratory chain. The immediate electron acceptor for the enzyme in this species is believed to be ubiquinone. Couples the redox reaction to proton translocation (for every two electrons transferred, four hydrogen ions are translocated across the cytoplasmic membrane), and thus conserves the redox energy in a proton gradient. The polypeptide is NADH-quinone oxidoreductase subunit D (Helicobacter hepaticus (strain ATCC 51449 / 3B1)).